The sequence spans 199 residues: Recombination protein RecR (199 aa).

A C4-type zinc finger spans residues 57-72 (CQACRTFTEETLCPIC). The 96-residue stretch at 81–176 (EVICVVETPA…SVSRIAHGVP (96 aa)) folds into the Toprim domain.

This sequence belongs to the RecR family.

Functionally, may play a role in DNA repair. It seems to be involved in an RecBC-independent recombinational process of DNA repair. It may act with RecF and RecO. The chain is Recombination protein RecR from Shewanella woodyi (strain ATCC 51908 / MS32).